Here is a 21-residue protein sequence, read N- to C-terminus: Azemiopsin (21 aa).

Over residues 1–14 the composition is skewed to pro residues; the sequence is DNWWPKPPHQGPRP. Positions 1 to 21 are disordered; that stretch reads DNWWPKPPHQGPRPPRPRPKP. Implicated in receptor binding regions lie at residues 3-6, 8-11, and 13-14; these read WWPK, PHQG, and RP.

In terms of assembly, monomer. Expressed by the venom gland.

Its subcellular location is the secreted. Its function is as follows. In vitro, reversibly blocks human muscle-type nicotinic acetylcholine receptors (nAChR) alpha-1-beta-1-epsilon-delta/CHRNA1-CHRNB1-CHRNE-CHRND (EC(50)=0.44 uM) and alpha-1-beta-1-gamma-delta/CHRNA1-CHRNB1-CHRNG-CHRND (EC(50)=1.56 uM). Binds to nAChR from T.californica (IC(50)=0.03-0.18 uM), human neuronal nAChR alpha-7/CHRNA7 (IC(50)=22 uM) and acetylcholine-binding proteins (AChBP) from L.stagnalis (IC(50)=63 uM) and A.californica (IC(50)=230 uM). The sequence is that of Azemiopsin from Azemiops feae (Fea's viper).